The primary structure comprises 870 residues: Radial spoke head 10 homolog B2 (870 aa).

Positions 1-16 (MVKEKKKADKKGEKSA) are enriched in basic and acidic residues. Residues 1-44 (MVKEKKKADKKGEKSARSPSSLSDNLDFSKQDGNTTRQEMSPAG) form a disordered region. The span at 17–39 (RSPSSLSDNLDFSKQDGNTTRQE) shows a compositional bias: polar residues. 10 MORN repeats span residues 86–108 (YEGEKVRGLYEGEGFAAFQGGCT), 109–131 (YRGMFSEGLMHGQGTYIWADGLK), 132–154 (YEGDFVKNVPMNHGVYTWPDGSM), 155–177 (YEGEVVNGMRNGFGMFKCSTQPV), 179–201 (YIGHWCNGKRHGKGSIYYNQEGT), 204–226 (YEGDWVQNIKKGWGIRCYKSGNI), 227–249 (YEGQWEDNMRHGEGRMRWLTTNE), 251–273 (YTGRWERGIQNGFGTHTWFLKRI), 284–306 (YIGEFVNGYRHGRGKFYYASGAM), and 307–329 (YDGEWVSNKKHGMGRLTFKNGRV). Residues 674 to 704 (NKSPSAVMSHESDAAHSDSARSSSSKLELSP) form a disordered region. The span at 683–692 (HESDAAHSDS) shows a compositional bias: basic and acidic residues. The segment covering 693–703 (ARSSSSKLELS) has biased composition (low complexity). The stretch at 784-811 (KEKIRADRLRSTAQAQQRKMEDDELEAR) forms a coiled coil. The tract at residues 840–870 (VSSSHLILDPPKEDVTVSPSSKTITSKKKKK) is disordered.

In terms of assembly, interacts with RSPH6A. Does not appear to be part of the axonemal radial spoke complexes 1 or 2.

It is found in the cytoplasm. The protein localises to the cytoskeleton. The protein resides in the cilium axoneme. Its subcellular location is the cell projection. It localises to the cilium. It is found in the flagellum. Its function is as follows. May function as part of the axonemal radial spoke complex 3 (RS3). Radial spoke complexes are important for ciliary motility. The protein is Radial spoke head 10 homolog B2 (RSPH10B2) of Homo sapiens (Human).